Consider the following 217-residue polypeptide: Protein GrpE (217 aa).

The span at 1–10 (MSDHAEHAAD) shows a compositional bias: basic and acidic residues. Positions 1-39 (MSDHAEHAADAADTDAPEGDDAGGDDGEQAGDDGTSALS) are disordered. The span at 12-31 (ADTDAPEGDDAGGDDGEQAG) shows a compositional bias: acidic residues.

This sequence belongs to the GrpE family. As to quaternary structure, homodimer.

The protein localises to the cytoplasm. In terms of biological role, participates actively in the response to hyperosmotic and heat shock by preventing the aggregation of stress-denatured proteins, in association with DnaK and GrpE. It is the nucleotide exchange factor for DnaK and may function as a thermosensor. Unfolded proteins bind initially to DnaJ; upon interaction with the DnaJ-bound protein, DnaK hydrolyzes its bound ATP, resulting in the formation of a stable complex. GrpE releases ADP from DnaK; ATP binding to DnaK triggers the release of the substrate protein, thus completing the reaction cycle. Several rounds of ATP-dependent interactions between DnaJ, DnaK and GrpE are required for fully efficient folding. The polypeptide is Protein GrpE (Halobacterium salinarum (strain ATCC 29341 / DSM 671 / R1)).